Reading from the N-terminus, the 355-residue chain is 1D-myo-inositol 2-acetamido-2-deoxy-alpha-D-glucopyranoside deacetylase 3 (355 aa).

Zn(2+) contacts are provided by H31, D34, and H169.

The protein belongs to the MshB deacetylase family. The cofactor is Zn(2+).

It carries out the reaction 1D-myo-inositol 2-acetamido-2-deoxy-alpha-D-glucopyranoside + H2O = 1D-myo-inositol 2-amino-2-deoxy-alpha-D-glucopyranoside + acetate. In terms of biological role, catalyzes the deacetylation of 1D-myo-inositol 2-acetamido-2-deoxy-alpha-D-glucopyranoside (GlcNAc-Ins) in the mycothiol biosynthesis pathway. This Catenulispora acidiphila (strain DSM 44928 / JCM 14897 / NBRC 102108 / NRRL B-24433 / ID139908) protein is 1D-myo-inositol 2-acetamido-2-deoxy-alpha-D-glucopyranoside deacetylase 3.